The chain runs to 172 residues: Female-specific lacrimal gland protein (172 aa).

An N-terminal signal peptide occupies residues Met-1–Ala-16. Cystine bridges form between Cys-60-Cys-64 and Cys-79-Cys-170.

It belongs to the calycin superfamily. Lipocalin family. As to expression, expressed in the lacrimal gland from where it is secreted into tears (at protein level).

Its subcellular location is the secreted. In Mesocricetus auratus (Golden hamster), this protein is Female-specific lacrimal gland protein.